Reading from the N-terminus, the 397-residue chain is Elongation factor Tu (397 aa).

Residues 10–207 (KPHVNIGTIG…AVDESIPDPV (198 aa)) enclose the tr-type G domain. The segment at 19–26 (GHVDHGKT) is G1. Residue 19–26 (GHVDHGKT) coordinates GTP. Threonine 26 serves as a coordination point for Mg(2+). The segment at 63–67 (GITIN) is G2. Residues 84 to 87 (DAPG) are G3. Residues 84-88 (DAPGH) and 139-142 (NKAD) contribute to the GTP site. The interval 139–142 (NKAD) is G4. The tract at residues 177–179 (SGL) is G5.

It belongs to the TRAFAC class translation factor GTPase superfamily. Classic translation factor GTPase family. EF-Tu/EF-1A subfamily. Monomer.

The protein resides in the cytoplasm. The catalysed reaction is GTP + H2O = GDP + phosphate + H(+). Its function is as follows. GTP hydrolase that promotes the GTP-dependent binding of aminoacyl-tRNA to the A-site of ribosomes during protein biosynthesis. The sequence is that of Elongation factor Tu from Tropheryma whipplei (strain Twist) (Whipple's bacillus).